The sequence spans 255 residues: Proteasome subunit alpha type-3 (255 aa).

An N-acetylserine modification is found at Ser2. N6-acetyllysine is present on residues Lys57, Lys206, and Lys230. Ser243 and Ser250 each carry phosphoserine.

It belongs to the peptidase T1A family. As to quaternary structure, the 26S proteasome consists of a 20S proteasome core and two 19S regulatory subunits. The 20S proteasome core is a barrel-shaped complex made of 28 subunits that are arranged in four stacked rings. The two outer rings are each formed by seven alpha subunits, and the two inner rings are formed by seven beta subunits. The proteolytic activity is exerted by three beta-subunits PSMB5, PSMB6 and PSMB7. Interacts with AURKB. Interacts with CDKN1A. Interacts with MDM2 and RB1. Interacts with the C-terminus of TBXA2R isoform 2. Interacts with DNAJB2.

It localises to the cytoplasm. The protein localises to the nucleus. Functionally, component of the 20S core proteasome complex involved in the proteolytic degradation of most intracellular proteins. This complex plays numerous essential roles within the cell by associating with different regulatory particles. Associated with two 19S regulatory particles, forms the 26S proteasome and thus participates in the ATP-dependent degradation of ubiquitinated proteins. The 26S proteasome plays a key role in the maintenance of protein homeostasis by removing misfolded or damaged proteins that could impair cellular functions, and by removing proteins whose functions are no longer required. Associated with the PA200 or PA28, the 20S proteasome mediates ubiquitin-independent protein degradation. This type of proteolysis is required in several pathways including spermatogenesis (20S-PA200 complex) or generation of a subset of MHC class I-presented antigenic peptides (20S-PA28 complex). Binds to the C-terminus of CDKN1A and thereby mediates its degradation. Negatively regulates the membrane trafficking of the cell-surface thromboxane A2 receptor (TBXA2R) isoform 2. In Bos taurus (Bovine), this protein is Proteasome subunit alpha type-3 (PSMA3).